A 544-amino-acid polypeptide reads, in one-letter code: Coiled-coil domain-containing protein 82 (544 aa).

Residues 1–14 are compositionally biased toward basic residues; the sequence is MIHVRRHETRRNSK. The interval 1–294 is disordered; that stretch reads MIHVRRHETR…ESDEDGDDYI (294 aa). The span at 16–27 shows a compositional bias: basic and acidic residues; the sequence is HVPEQKSRVDWR. Positions 39–67 are enriched in acidic residues; that stretch reads DSDEELDSEEFDSDEELDSDESFENDEEL. A phosphoserine mark is found at serine 88, serine 131, serine 154, serine 195, and serine 219. Residues 88 to 108 show a composition bias toward polar residues; it reads SKIQSEGNDSKCLINSGNGST. Basic and acidic residues predominate over residues 112–132; it reads ETNKIKHRNIDLQDQEKHLSQ. Over residues 223-248 the composition is skewed to basic and acidic residues; sequence MEQKTPEKTLAAQKREKLQKLKELSK. Threonine 227 bears the Phosphothreonine mark. Residues 229–256 adopt a coiled-coil conformation; it reads EKTLAAQKREKLQKLKELSKQRSRQRRS. The segment covering 273-294 has biased composition (acidic residues); it reads DEVDEEEEEDNYESDEDGDDYI. Residue serine 329 is modified to Phosphoserine.

The protein is Coiled-coil domain-containing protein 82 (CCDC82) of Homo sapiens (Human).